The chain runs to 141 residues: Hemoglobin subunit alpha (141 aa).

The Globin domain maps to 1–141; that stretch reads VLSPADKTNV…VSTVLTSKYR (141 aa). A Phosphoserine modification is found at serine 3. The residue at position 7 (lysine 7) is an N6-succinyllysine. Phosphothreonine is present on threonine 8. Residue lysine 11 is modified to N6-succinyllysine. Position 16 is an N6-acetyllysine; alternate (lysine 16). An N6-succinyllysine; alternate modification is found at lysine 16. A Phosphotyrosine modification is found at tyrosine 24. Phosphoserine is present on serine 35. At lysine 40 the chain carries N6-succinyllysine. Serine 49 carries the phosphoserine modification. Histidine 58 contributes to the O2 binding site. Histidine 87 provides a ligand contact to heme b. Residue serine 102 is modified to Phosphoserine. Threonine 108 is subject to Phosphothreonine. Phosphoserine is present on residues serine 124 and serine 131. Residues threonine 134 and threonine 137 each carry the phosphothreonine modification. At serine 138 the chain carries Phosphoserine.

The protein belongs to the globin family. Heterotetramer of two alpha chains and two beta chains. Red blood cells.

Functionally, involved in oxygen transport from the lung to the various peripheral tissues. Its function is as follows. Hemopressin acts as an antagonist peptide of the cannabinoid receptor CNR1. Hemopressin-binding efficiently blocks cannabinoid receptor CNR1 and subsequent signaling. In Gorilla gorilla gorilla (Western lowland gorilla), this protein is Hemoglobin subunit alpha (HBA).